We begin with the raw amino-acid sequence, 79 residues long: D-alanyl carrier protein (79 aa).

One can recognise a Carrier domain in the interval 2-79; it reads AEFKEQVLDI…MVIKKLEEIR (78 aa). The residue at position 37 (Ser-37) is an O-(pantetheine 4'-phosphoryl)serine.

Belongs to the DltC family. In terms of processing, 4'-phosphopantetheine is transferred from CoA to a specific serine of apo-DCP.

The protein resides in the cytoplasm. The protein operates within cell wall biogenesis; lipoteichoic acid biosynthesis. Carrier protein involved in the D-alanylation of lipoteichoic acid (LTA). The loading of thioester-linked D-alanine onto DltC is catalyzed by D-alanine--D-alanyl carrier protein ligase DltA. The DltC-carried D-alanyl group is further transferred to cell membrane phosphatidylglycerol (PG) by forming an ester bond, probably catalyzed by DltD. D-alanylation of LTA plays an important role in modulating the properties of the cell wall in Gram-positive bacteria, influencing the net charge of the cell wall. The chain is D-alanyl carrier protein from Bacillus mycoides (strain KBAB4) (Bacillus weihenstephanensis).